The chain runs to 647 residues: Pumilio homolog 3 (647 aa).

A compositionally biased stretch (basic residues) spans 1–10 (MEVKGKKKFT). The tract at residues 1–123 (MEVKGKKKFT…KKKKELKQSR (123 aa)) is disordered. Lys33 is subject to N6-acetyllysine. Residues 59–68 (PGKKGVKQFK) are compositionally biased toward basic residues. Positions 102-123 (SGAKKPKWDDFKKKKKELKQSR) are enriched in basic and acidic residues. Residues 105-117 (KKPKWDDFKKKKK) carry the Nuclear localization signal motif. The region spanning 142-509 (ESLRRKDCDK…VVLDKSACVL (368 aa)) is the PUM-HD domain. 11 Pumilio repeats span residues 176–211 (HDSTRVIQCFIQYGNEEQRKQAFQELQGDLVELSKA), 212–247 (KYSRNIVKKFLMYGSKPQVAEIIRSFKGHVRKMLRH), 248–276 (SEASAIVEYAYNDKAILEQRNMLTEELYG), 288–324 (PTLDKVLELQPAKLELIMDEMKQILTPMAQKEAVIKH), 325–360 (SLVHKVFLDFFTYAPPKPRSELIEAIREAVVYLAHT), 361–396 (HDGARVAMHCLWHGTPKDRKVIVKTMKTYVEKVANG), 397–434 (QYSHLVLLAAFDCIDDTKLVKQIIISEIISSLPSIVND), 435–503 (KYGR…VVLD), 504–550 (KSAC…VAEH), 551–595 (PAGH…WASI), and 596–635 (NRGAIILSSLLQSCDQEVVNKVKGGLKPLIPTLEKNKSSS).

Interacts with PARP1 (via catalytic domain). As to expression, in the adult eye, expressed primarily in retinal ganglion cells and, to a lesser extent, in the pigmented cells.

It is found in the nucleus. It localises to the nucleolus. The protein localises to the nucleoplasm. The protein resides in the chromosome. Inhibits the poly(ADP-ribosyl)ation activity of PARP1 and the degradation of PARP1 by CASP3 following genotoxic stress. Binds to double-stranded RNA or DNA without sequence specificity. Involved in development of the eye and of primordial germ cells. This chain is Pumilio homolog 3, found in Mus musculus (Mouse).